Here is a 298-residue protein sequence, read N- to C-terminus: NAD kinase (298 aa).

D80 functions as the Proton acceptor in the catalytic mechanism. NAD(+) is bound by residues 80 to 81 (DG), 154 to 155 (ND), R182, D184, 195 to 200 (TAYALS), A219, and Q253.

The protein belongs to the NAD kinase family. Requires a divalent metal cation as cofactor.

The protein resides in the cytoplasm. It catalyses the reaction NAD(+) + ATP = ADP + NADP(+) + H(+). Involved in the regulation of the intracellular balance of NAD and NADP, and is a key enzyme in the biosynthesis of NADP. Catalyzes specifically the phosphorylation on 2'-hydroxyl of the adenosine moiety of NAD to yield NADP. The protein is NAD kinase of Acidovorax ebreus (strain TPSY) (Diaphorobacter sp. (strain TPSY)).